Reading from the N-terminus, the 151-residue chain is Large ribosomal subunit protein bL9 (151 aa).

This sequence belongs to the bacterial ribosomal protein bL9 family.

Its function is as follows. Binds to the 23S rRNA. In Pelobacter propionicus (strain DSM 2379 / NBRC 103807 / OttBd1), this protein is Large ribosomal subunit protein bL9.